Consider the following 190-residue polypeptide: Peptide deformylase (190 aa).

Fe cation-binding residues include Cys-94 and His-136. The active site involves Glu-137. His-140 lines the Fe cation pocket.

This sequence belongs to the polypeptide deformylase family. It depends on Fe(2+) as a cofactor.

It carries out the reaction N-terminal N-formyl-L-methionyl-[peptide] + H2O = N-terminal L-methionyl-[peptide] + formate. Functionally, removes the formyl group from the N-terminal Met of newly synthesized proteins. Requires at least a dipeptide for an efficient rate of reaction. N-terminal L-methionine is a prerequisite for activity but the enzyme has broad specificity at other positions. This Chlorobium phaeovibrioides (strain DSM 265 / 1930) (Prosthecochloris vibrioformis (strain DSM 265)) protein is Peptide deformylase.